The chain runs to 621 residues: Chaperone protein HtpG (621 aa).

The a; substrate-binding stretch occupies residues 1-328 (MTQEKKKFDA…SEDLPLNISR (328 aa)). Residues 329–544 (ESLQHNSVLE…DSAMDIRMER (216 aa)) form a b region. The interval 475–495 (SDIDVEQTTSQSEDKNTHSKK) is disordered. Basic and acidic residues predominate over residues 486–495 (SEDKNTHSKK). The segment at 545–621 (FLIEQKQITA…LNDIVQKAIL (77 aa)) is c.

It belongs to the heat shock protein 90 family. Homodimer.

It is found in the cytoplasm. Functionally, molecular chaperone. Has ATPase activity. In Rickettsia akari (strain Hartford), this protein is Chaperone protein HtpG.